Consider the following 497-residue polypeptide: Lysine--tRNA ligase (497 aa).

Positions 409 and 416 each coordinate Mg(2+).

It belongs to the class-II aminoacyl-tRNA synthetase family. As to quaternary structure, homodimer. Mg(2+) serves as cofactor.

The protein resides in the cytoplasm. The catalysed reaction is tRNA(Lys) + L-lysine + ATP = L-lysyl-tRNA(Lys) + AMP + diphosphate. The sequence is that of Lysine--tRNA ligase from Streptococcus pyogenes serotype M3 (strain ATCC BAA-595 / MGAS315).